The following is a 210-amino-acid chain: Na(+)-translocating NADH-quinone reductase subunit D (210 aa).

The next 6 membrane-spanning stretches (helical) occupy residues 14–34, 42–62, 72–92, 96–116, 131–151, and 178–198; these read PIIN…ALAV, LVMT…ISLI, IIVQ…VLQA, AISK…IVMG, FMDG…VGVV, and NGLL…IWLI.

The protein belongs to the NqrDE/RnfAE family. As to quaternary structure, composed of six subunits; NqrA, NqrB, NqrC, NqrD, NqrE and NqrF.

It is found in the cell inner membrane. The catalysed reaction is a ubiquinone + n Na(+)(in) + NADH + H(+) = a ubiquinol + n Na(+)(out) + NAD(+). Its function is as follows. NQR complex catalyzes the reduction of ubiquinone-1 to ubiquinol by two successive reactions, coupled with the transport of Na(+) ions from the cytoplasm to the periplasm. NqrA to NqrE are probably involved in the second step, the conversion of ubisemiquinone to ubiquinol. This chain is Na(+)-translocating NADH-quinone reductase subunit D, found in Shewanella frigidimarina (strain NCIMB 400).